Consider the following 211-residue polypeptide: 2,3-bisphosphoglycerate-dependent phosphoglycerate mutase (211 aa).

Substrate-binding positions include 9–16, 22–23, R61, 88–91, K99, 115–116, and 159–160; these read RHGQSDWN, TG, ERDY, RR, and GN. H10 serves as the catalytic Tele-phosphohistidine intermediate. E88 functions as the Proton donor/acceptor in the catalytic mechanism.

The protein belongs to the phosphoglycerate mutase family. BPG-dependent PGAM subfamily. In terms of assembly, homodimer.

The enzyme catalyses (2R)-2-phosphoglycerate = (2R)-3-phosphoglycerate. It participates in carbohydrate degradation; glycolysis; pyruvate from D-glyceraldehyde 3-phosphate: step 3/5. Its function is as follows. Catalyzes the interconversion of 2-phosphoglycerate and 3-phosphoglycerate. In Rhizobium johnstonii (strain DSM 114642 / LMG 32736 / 3841) (Rhizobium leguminosarum bv. viciae), this protein is 2,3-bisphosphoglycerate-dependent phosphoglycerate mutase.